We begin with the raw amino-acid sequence, 328 residues long: Tetraacyldisaccharide 4'-kinase (328 aa).

Thr55–Thr62 provides a ligand contact to ATP.

Belongs to the LpxK family.

It catalyses the reaction a lipid A disaccharide + ATP = a lipid IVA + ADP + H(+). Its pathway is glycolipid biosynthesis; lipid IV(A) biosynthesis; lipid IV(A) from (3R)-3-hydroxytetradecanoyl-[acyl-carrier-protein] and UDP-N-acetyl-alpha-D-glucosamine: step 6/6. Its function is as follows. Transfers the gamma-phosphate of ATP to the 4'-position of a tetraacyldisaccharide 1-phosphate intermediate (termed DS-1-P) to form tetraacyldisaccharide 1,4'-bis-phosphate (lipid IVA). This is Tetraacyldisaccharide 4'-kinase from Escherichia coli (strain SMS-3-5 / SECEC).